The primary structure comprises 447 residues: Tubulin beta-6 chain (447 aa).

Residues Gln-11, Glu-69, Ser-138, Gly-142, Thr-143, Gly-144, Asn-204, and Asn-226 each coordinate GTP. Glu-69 provides a ligand contact to Mg(2+). Residues 426 to 447 are disordered; sequence QDATAEEEGEFDEDEELDDGMM. Residues 429–447 are compositionally biased toward acidic residues; sequence TAEEEGEFDEDEELDDGMM.

Belongs to the tubulin family. In terms of assembly, dimer of alpha and beta chains. A typical microtubule is a hollow water-filled tube with an outer diameter of 25 nm and an inner diameter of 15 nM. Alpha-beta heterodimers associate head-to-tail to form protofilaments running lengthwise along the microtubule wall with the beta-tubulin subunit facing the microtubule plus end conferring a structural polarity. Microtubules usually have 13 protofilaments but different protofilament numbers can be found in some organisms and specialized cells. Requires Mg(2+) as cofactor.

It is found in the cytoplasm. Its subcellular location is the cytoskeleton. Its function is as follows. Tubulin is the major constituent of microtubules, a cylinder consisting of laterally associated linear protofilaments composed of alpha- and beta-tubulin heterodimers. Microtubules grow by the addition of GTP-tubulin dimers to the microtubule end, where a stabilizing cap forms. Below the cap, tubulin dimers are in GDP-bound state, owing to GTPase activity of alpha-tubulin. This chain is Tubulin beta-6 chain (TUBB6), found in Ectocarpus variabilis (Brown alga).